The chain runs to 508 residues: Aspartyl/glutamyl-tRNA(Asn/Gln) amidotransferase subunit B (508 aa).

The protein belongs to the GatB/GatE family. GatB subfamily. In terms of assembly, heterotrimer of A, B and C subunits.

The catalysed reaction is L-glutamyl-tRNA(Gln) + L-glutamine + ATP + H2O = L-glutaminyl-tRNA(Gln) + L-glutamate + ADP + phosphate + H(+). The enzyme catalyses L-aspartyl-tRNA(Asn) + L-glutamine + ATP + H2O = L-asparaginyl-tRNA(Asn) + L-glutamate + ADP + phosphate + 2 H(+). In terms of biological role, allows the formation of correctly charged Asn-tRNA(Asn) or Gln-tRNA(Gln) through the transamidation of misacylated Asp-tRNA(Asn) or Glu-tRNA(Gln) in organisms which lack either or both of asparaginyl-tRNA or glutaminyl-tRNA synthetases. The reaction takes place in the presence of glutamine and ATP through an activated phospho-Asp-tRNA(Asn) or phospho-Glu-tRNA(Gln). The chain is Aspartyl/glutamyl-tRNA(Asn/Gln) amidotransferase subunit B from Salinibacter ruber (strain DSM 13855 / M31).